We begin with the raw amino-acid sequence, 215 residues long: Probable GTP-binding protein EngB (215 aa).

The EngB-type G domain maps to 30–204 (EGLEVAFAGR…QMVLAQWLGL (175 aa)). Residues 38 to 45 (GRSNAGKS), 64 to 68 (GRTQL), 82 to 85 (DLPG), 149 to 152 (TKAD), and 182 to 185 (LFSA) each bind GTP. Residues S45 and T66 each coordinate Mg(2+).

It belongs to the TRAFAC class TrmE-Era-EngA-EngB-Septin-like GTPase superfamily. EngB GTPase family. Requires Mg(2+) as cofactor.

Necessary for normal cell division and for the maintenance of normal septation. In Pseudomonas aeruginosa (strain ATCC 15692 / DSM 22644 / CIP 104116 / JCM 14847 / LMG 12228 / 1C / PRS 101 / PAO1), this protein is Probable GTP-binding protein EngB.